Consider the following 204-residue polypeptide: Ribonuclease HII (204 aa).

The 197-residue stretch at 1–197 folds into the RNase H type-2 domain; that stretch reads MILGIDEAGR…KNCILNPKLL (197 aa). Residues aspartate 6, glutamate 7, and aspartate 103 each coordinate a divalent metal cation.

The protein belongs to the RNase HII family. It depends on Mn(2+) as a cofactor. Mg(2+) is required as a cofactor.

The protein resides in the cytoplasm. The enzyme catalyses Endonucleolytic cleavage to 5'-phosphomonoester.. Functionally, endonuclease that specifically degrades the RNA of RNA-DNA hybrids. This Helicobacter pylori (strain P12) protein is Ribonuclease HII.